A 208-amino-acid chain; its full sequence is 7-carboxy-7-deazaguanine synthase (208 aa).

Substrate contacts are provided by residues 23 to 25 (LQG) and Arg38. The region spanning 29 to 208 (WAGGNAFFIR…LQTHKYLGVR (180 aa)) is the Radical SAM core domain. Residues Cys42, Cys46, and Cys49 each coordinate [4Fe-4S] cluster. Residue Thr83 coordinates substrate. S-adenosyl-L-methionine is bound by residues Gly85 and 126 to 128 (SPK).

It belongs to the radical SAM superfamily. 7-carboxy-7-deazaguanine synthase family. Homodimer. Requires [4Fe-4S] cluster as cofactor. S-adenosyl-L-methionine is required as a cofactor. The cofactor is Mg(2+).

The enzyme catalyses 6-carboxy-5,6,7,8-tetrahydropterin + H(+) = 7-carboxy-7-deazaguanine + NH4(+). It participates in purine metabolism; 7-cyano-7-deazaguanine biosynthesis. Its function is as follows. Catalyzes the complex heterocyclic radical-mediated conversion of 6-carboxy-5,6,7,8-tetrahydropterin (CPH4) to 7-carboxy-7-deazaguanine (CDG), a step common to the biosynthetic pathways of all 7-deazapurine-containing compounds. This Synechocystis sp. (strain ATCC 27184 / PCC 6803 / Kazusa) protein is 7-carboxy-7-deazaguanine synthase.